The sequence spans 249 residues: Ribonuclease PH (249 aa).

Residues Arg86 and 124–126 (GTR) each bind phosphate.

Belongs to the RNase PH family. Homohexameric ring arranged as a trimer of dimers.

It catalyses the reaction tRNA(n+1) + phosphate = tRNA(n) + a ribonucleoside 5'-diphosphate. Functionally, phosphorolytic 3'-5' exoribonuclease that plays an important role in tRNA 3'-end maturation. Removes nucleotide residues following the 3'-CCA terminus of tRNAs; can also add nucleotides to the ends of RNA molecules by using nucleoside diphosphates as substrates, but this may not be physiologically important. Probably plays a role in initiation of 16S rRNA degradation (leading to ribosome degradation) during starvation. This chain is Ribonuclease PH, found in Clostridium botulinum (strain Alaska E43 / Type E3).